Here is a 545-residue protein sequence, read N- to C-terminus: MELERSYRENDEYFLMFAATLLFGFVLYLFTLRRRRRRREKKGGAGSMEIINGAYKMTSSSEVNGHCTPEDIAGSSDDVIIVGAGVAGSALAYTLAKDGRRVHVIERDLTEQDRIVGELLQPGGYLKLVELGLEDCVNEIDAQRVFGYALYMDGKNTRLSYPLEKFHADVAGRSFHNGRFIQRMREKAASLPNVRMEQGTVTSLVEQKGTVKGVRYKTKNGQEMSAAYAPLTIVCDGCFSNLRHSLCNPKVDVPSCFVGLILENIDLPHINHGHVILADPSPILFYKISSTEIRCLVDVPGQKVPSIANGELAHYLKTSVAPQIPPELYKSFIAAIDKGKIKTMPNRSMPADPHSTPGALLLGDAFNMRHPLTGGGMTVALSDIVLIRDLLRPLRDLHDSSTLCKYLESFYTLRKPVASTINTLAGALYKVFCASPDKARQEMRDACFDYLSLGGICSEGPIALLSGLNPRPMSLFFHFFAVAIYGVGRLLIPFPSPRKMWLGARLISGASGIIFPIIKSEGVRQMFFPATVPAYYRAPPITKKM.

The helical transmembrane segment at 12–32 (EYFLMFAATLLFGFVLYLFTL) threads the bilayer. FAD is bound by residues 86 to 87 (VA), 106 to 107 (ER), R114, R185, V201, D364, and M377. Transmembrane regions (helical) follow at residues 475–495 (LFFHFFAVAIYGVGRLLIPFP) and 500–520 (MWLGARLISGASGIIFPIIKS).

The protein belongs to the squalene monooxygenase family. Requires FAD as cofactor. Weak expression in petioles and flower buds and barely detectable in roots and leaves. In petioles, preferentially observed in vascular bundle tissue (phloem cells and parenchymatous cells near xylem) and resin ducts.

It localises to the membrane. The catalysed reaction is squalene + reduced [NADPH--hemoprotein reductase] + O2 = (S)-2,3-epoxysqualene + oxidized [NADPH--hemoprotein reductase] + H2O + H(+). It functions in the pathway terpene metabolism; lanosterol biosynthesis; lanosterol from farnesyl diphosphate: step 2/3. Component of the triterpene saponins (e.g. ginsenosides or panaxosides) and phytosterols biosynthetic pathways. Catalyzes the first oxygenation step in sterol biosynthesis and is suggested to be one of the rate-limiting enzymes in this pathway. The protein is Squalene monooxygenase SE2 of Panax ginseng (Korean ginseng).